The chain runs to 22 residues: Brain peptide MVPVPVHHMADELLRNGPDTVI (22 aa).

The protein is Brain peptide MVPVPVHHMADELLRNGPDTVI of Apis mellifera (Honeybee).